Consider the following 145-residue polypeptide: D-aminoacyl-tRNA deacylase (145 aa).

The Gly-cisPro motif, important for rejection of L-amino acids signature appears at 137–138; sequence GP.

Belongs to the DTD family. As to quaternary structure, homodimer.

Its subcellular location is the cytoplasm. It carries out the reaction glycyl-tRNA(Ala) + H2O = tRNA(Ala) + glycine + H(+). The catalysed reaction is a D-aminoacyl-tRNA + H2O = a tRNA + a D-alpha-amino acid + H(+). Functionally, an aminoacyl-tRNA editing enzyme that deacylates mischarged D-aminoacyl-tRNAs. Also deacylates mischarged glycyl-tRNA(Ala), protecting cells against glycine mischarging by AlaRS. Acts via tRNA-based rather than protein-based catalysis; rejects L-amino acids rather than detecting D-amino acids in the active site. By recycling D-aminoacyl-tRNA to D-amino acids and free tRNA molecules, this enzyme counteracts the toxicity associated with the formation of D-aminoacyl-tRNA entities in vivo and helps enforce protein L-homochirality. This chain is D-aminoacyl-tRNA deacylase, found in Klebsiella pneumoniae subsp. pneumoniae (strain ATCC 700721 / MGH 78578).